Reading from the N-terminus, the 257-residue chain is NAD-capped RNA hydrolase NudC (257 aa).

Arginine 69 contacts substrate. Residues cysteine 98 and cysteine 101 each coordinate Zn(2+). A substrate-binding site is contributed by glutamate 111. Cysteine 116 and cysteine 119 together coordinate Zn(2+). Position 124 (tyrosine 124) interacts with substrate. A Nudix hydrolase domain is found at 125 to 248; the sequence is PQIAPCIIVA…TVARRLIEDT (124 aa). Residues alanine 158, glutamate 174, and glutamate 178 each coordinate a divalent metal cation. Residues 159–180 carry the Nudix box motif; it reads GFVEVGETLEQAVAREVMEESG. Position 192–199 (192–199) interacts with substrate; that stretch reads QPWPFPQS. Glutamate 219 is an a divalent metal cation binding site. Alanine 241 lines the substrate pocket.

The protein belongs to the Nudix hydrolase family. NudC subfamily. As to quaternary structure, homodimer. Mg(2+) is required as a cofactor. Requires Mn(2+) as cofactor. It depends on Zn(2+) as a cofactor.

It catalyses the reaction a 5'-end NAD(+)-phospho-ribonucleoside in mRNA + H2O = a 5'-end phospho-adenosine-phospho-ribonucleoside in mRNA + beta-nicotinamide D-ribonucleotide + 2 H(+). The enzyme catalyses NAD(+) + H2O = beta-nicotinamide D-ribonucleotide + AMP + 2 H(+). It carries out the reaction NADH + H2O = reduced beta-nicotinamide D-ribonucleotide + AMP + 2 H(+). Functionally, mRNA decapping enzyme that specifically removes the nicotinamide adenine dinucleotide (NAD) cap from a subset of mRNAs by hydrolyzing the diphosphate linkage to produce nicotinamide mononucleotide (NMN) and 5' monophosphate mRNA. The NAD-cap is present at the 5'-end of some mRNAs and stabilizes RNA against 5'-processing. Has preference for mRNAs with a 5'-end purine. Catalyzes the hydrolysis of a broad range of dinucleotide pyrophosphates. The chain is NAD-capped RNA hydrolase NudC from Salmonella agona (strain SL483).